Consider the following 64-residue polypeptide: Large ribosomal subunit protein bL28 (64 aa).

The interval 1–27 (MAKRDQLTGKGPLSGNTRSHAMNHSKR) is disordered.

This sequence belongs to the bacterial ribosomal protein bL28 family.

This chain is Large ribosomal subunit protein bL28, found in Ureaplasma parvum serovar 3 (strain ATCC 27815 / 27 / NCTC 11736).